The chain runs to 152 residues: Ubiquitin-conjugating enzyme E2 N (152 aa).

The UBC core domain maps to 3-149; that stretch reads GLPRRIIKET…ARAWTRLYAM (147 aa). Position 82 is an N6-acetyllysine (Lys-82). The active-site Glycyl thioester intermediate is the Cys-87. Lys-92 participates in a covalent cross-link: Glycyl lysine isopeptide (Lys-Gly) (interchain with G-Cter in ISG15).

It belongs to the ubiquitin-conjugating enzyme family. In terms of assembly, heterodimer with UBE2V2. Interacts (UBE2V2-UBE2N heterodimer) with the E3 ligase STUB1 (via the U-box domain); the complex has a specific 'Lys-63'-linked polyubiquitination activity. Interacts with RNF8 and RNF168. Interacts with RNF11. Interacts with the E3 ligases, HLTF and SHPRH; the interactions promote the 'Lys-63'-linked polyubiquitination of PCNA upon genotoxic stress and lead to DNA repair. Interacts with ARIH2 (via RING-type 2). Interacts with OTUB1; leading to inhibit E2-conjugating activity. Interacts with GPS2; leading to inhibit E2-conjugating activity. Interacts with RIGI and RNF135; involved in RIGI ubiquitination and activation. Post-translationally, conjugation to ISG15 impairs formation of the thioester bond with ubiquitin but not interaction with UBE2V2.

The enzyme catalyses S-ubiquitinyl-[E1 ubiquitin-activating enzyme]-L-cysteine + [E2 ubiquitin-conjugating enzyme]-L-cysteine = [E1 ubiquitin-activating enzyme]-L-cysteine + S-ubiquitinyl-[E2 ubiquitin-conjugating enzyme]-L-cysteine.. Its pathway is protein modification; protein ubiquitination. With respect to regulation, activity is inhibited by binding to OTUB1, which prevents 'Lys-63'-linked polyubiquitination. Activity is inhibited by GPS2, leading to prevent 'Lys-63'-linked polyubiquitination. Functionally, the UBE2V1-UBE2N and UBE2V2-UBE2N heterodimers catalyze the synthesis of non-canonical 'Lys-63'-linked polyubiquitin chains. This type of polyubiquitination does not lead to protein degradation by the proteasome. Mediates transcriptional activation of target genes. Plays a role in the control of progress through the cell cycle and differentiation. Plays a role in the error-free DNA repair pathway and contributes to the survival of cells after DNA damage. Acts together with the E3 ligases, HLTF and SHPRH, in the 'Lys-63'-linked poly-ubiquitination of PCNA upon genotoxic stress, which is required for DNA repair. Appears to act together with E3 ligase RNF5 in the 'Lys-63'-linked polyubiquitination of JKAMP thereby regulating JKAMP function by decreasing its association with components of the proteasome and ERAD. Promotes TRIM5 capsid-specific restriction activity and the UBE2V1-UBE2N heterodimer acts in concert with TRIM5 to generate 'Lys-63'-linked polyubiquitin chains which activate the MAP3K7/TAK1 complex which in turn results in the induction and expression of NF-kappa-B and MAPK-responsive inflammatory genes. Together with RNF135 and UB2V1, catalyzes the viral RNA-dependent 'Lys-63'-linked polyubiquitination of RIGI to activate the downstream signaling pathway that leads to interferon beta production. UBE2V1-UBE2N together with TRAF3IP2 E3 ubiquitin ligase mediate 'Lys-63'-linked polyubiquitination of TRAF6, a component of IL17A-mediated signaling pathway. The sequence is that of Ubiquitin-conjugating enzyme E2 N (UBE2N) from Bos taurus (Bovine).